We begin with the raw amino-acid sequence, 303 residues long: MSISTFNFQFYNYKLSPSSPGFGSTASRSSSSCISELEMDIDEDMSAQPTITSTPKPRFTSQLAVELAKTEPGNGISPLRPKLHTAQKRWSMELREKVLEMSKRNNGQEKPQTARQQEQRQPQEQPLQQEELQHQQQEPTVTDKINFFNKLTNTFESGFSKLMPQASSTNNRFIAMLRTARPQNVATTTANSSTANSFLGSDHSLSGSVTGQVPPPKPKRLSATTAQFATPHVPAMGVGKGGSQRKCSLRRKPSMDKSRATISRQSSSASVRTQNHAIMEDLSLVVPVRLRIAEYEQRISMSA.

2 disordered regions span residues 102–142 (SKRN…PTVT) and 185–272 (VATT…ASVR). 2 stretches are compositionally biased toward low complexity: residues 115–138 (RQQE…QQQE) and 185–197 (VATT…TANS). The segment covering 260 to 272 (ATISRQSSSASVR) has biased composition (polar residues).

In terms of tissue distribution, restricted to the blastoderm.

The protein resides in the cytoplasm. Its subcellular location is the cytoskeleton. In terms of biological role, acts as a regulator of the microfilament network governing cellularization of the embryo. Determines the timing of a key conformational transition in the cortical microfilament network: the proper coordination of membrane invagination and basal closure of the cells. To do this, bnk possibly physically links neighboring contractile units of the early cycle 14 microfilament network in a manner that prevents basal constriction until the proper stage has been reached. Bnk together with nullo and Sry-alpha may provide auxiliary functions, by acting both to stabilize a large and dynamic microfilament structure and regulate its functions. This chain is Protein bottleneck (bnk), found in Drosophila melanogaster (Fruit fly).